Reading from the N-terminus, the 421-residue chain is 5-hydroxytryptamine receptor 2 (421 aa).

The Extracellular segment spans residues 1–21; the sequence is MLCGRLRHTMNSTTCFFSHRT. N-linked (GlcNAc...) asparagine glycosylation occurs at Asn11. A helical membrane pass occupies residues 22–42; sequence VLIGIVGSLIIAVSVVGNVLV. Residues 43–59 are Cytoplasmic-facing; the sequence is CLAIFTEPILSHSKSKF. The chain crosses the membrane as a helical span at residues 60-79; it reads FIVSLAVADLLLALLVMTFA. Residues 80-95 lie on the Extracellular side of the membrane; the sequence is LVNSLYGYWLFGETFC. A disulfide bond links Cys95 and Cys210. A helical transmembrane segment spans residues 96–118; the sequence is FIWMSADVMCETASIFSICVISY. The Cytoplasmic segment spans residues 119-138; the sequence is NRLKQVQKPLQYEEFMTTTR. A helical membrane pass occupies residues 139-160; sequence ALLIIASLWICSFVVSFVPFFL. Residues 161–213 lie on the Extracellular side of the membrane; that stretch reads EWHELSMEEIKTIFKDLISDKVKTSDAHTFSFALEQTLGDNRTSNPKPECLFD. Residues 214-234 traverse the membrane as a helical segment; that stretch reads VHFIYSVIYSLFCFYIPCTLM. Residues 235–274 are Cytoplasmic-facing; the sequence is LRNYLRLFLIAKKHHVRIKNLHRLHRNQGTQGSKAARTLT. The chain crosses the membrane as a helical span at residues 275 to 295; it reads IITGTFLACWLPFFIINPIEA. Residues 296-304 lie on the Extracellular side of the membrane; the sequence is VDEHLIPLE. The chain crosses the membrane as a helical span at residues 305–325; sequence CFMVTIWLGYFNSCVNPIIYG. Over 326-421 the chain is Cytoplasmic; sequence TSNSKFRAAF…MLSESDTVFS (96 aa).

The protein belongs to the G-protein coupled receptor 1 family. As to expression, central nervous system.

The protein localises to the cell membrane. Its function is as follows. This is one of the several different receptors for 5-hydroxytryptamine (serotonin). 5-HT plays important roles in various behavioral and physiological processes in aplysia. These include feeding, locomotion, circadian rhythm, learning and memory, synaptic plasticity, and synaptic growth. This receptor is mediated by G proteins that stimulate phospholipase C. This Aplysia californica (California sea hare) protein is 5-hydroxytryptamine receptor 2 (5HTB2).